The sequence spans 1582 residues: Dynein axonemal assembly factor 1 homolog (1582 aa).

LRR repeat units lie at residues 38-60 (RLND…DEYT), 61-82 (ELKS…TKLT), 83-104 (KLKC…EFNR), 105-126 (ELDT…GTDI), 129-150 (VLNT…AALV), and 154-175 (TLSV…KIFE). The LRRCT domain maps to 189 to 227 (PVVSRLPQYRKTLILACKELTYLDSRPVFPRDRACAEAW). 11 disordered regions span residues 245–420 (AERR…SEMD), 560–587 (SSDV…VKSQ), 859–878 (FSKD…EDRR), 913–942 (DTGE…DDDA), 1073–1092 (SSNE…LVER), 1101–1137 (MQRM…MGEG), 1150–1218 (TEII…QAEG), 1305–1345 (KDNE…TAKD), 1358–1438 (LDPE…PYQT), 1484–1517 (EDSK…NPKN), and 1529–1548 (PSES…STEQ). Residues 313-327 (ESQASEHSTTSSTSA) show a composition bias toward low complexity. Over residues 339–392 (HIAERISNRRVKPLEGRPKVLYDEAASGDEKAVTTTDSKKDSNAEDLPELKDIT) the composition is skewed to basic and acidic residues. Residues 409–420 (TLLQSDSGSEMD) are compositionally biased toward polar residues. Acidic residues predominate over residues 572-582 (ESDEEPTEEEM). Over residues 928–942 (SDSESEKEVEEDDDA) the composition is skewed to acidic residues. Composition is skewed to basic and acidic residues over residues 1078–1092 (LEAK…LVER) and 1103–1125 (RMKE…KEEE). Residues 1166–1178 (EGGAQQEEGGAQS) show a composition bias toward low complexity. 3 stretches are compositionally biased toward basic and acidic residues: residues 1321-1335 (PKEE…ETET), 1398-1427 (SALK…KDTE), and 1484-1514 (EDSK…RPEN). The span at 1529-1540 (PSESLEDTEATE) shows a compositional bias: acidic residues.

It belongs to the DNAAF1 family.

The protein localises to the cell projection. The protein resides in the cilium. Functionally, cilium-specific protein required for cilia structures. The sequence is that of Dynein axonemal assembly factor 1 homolog (dtr) from Drosophila pseudoobscura pseudoobscura (Fruit fly).